The chain runs to 431 residues: Adenylosuccinate synthetase (431 aa).

GTP is bound by residues 13 to 19 (GDEGKGK) and 41 to 43 (GHT). Asp-14 serves as the catalytic Proton acceptor. The Mg(2+) site is built by Asp-14 and Gly-41. Residues 14–17 (DEGK), 39–42 (NAGH), Thr-130, Arg-144, Gln-225, Thr-240, and Arg-304 each bind IMP. His-42 (proton donor) is an active-site residue. Substrate is bound at residue 300 to 306 (AVTGRPR). Residues Arg-306, 332–334 (KLD), and 415–417 (STG) contribute to the GTP site.

The protein belongs to the adenylosuccinate synthetase family. As to quaternary structure, homodimer. The cofactor is Mg(2+).

The protein resides in the cytoplasm. The enzyme catalyses IMP + L-aspartate + GTP = N(6)-(1,2-dicarboxyethyl)-AMP + GDP + phosphate + 2 H(+). Its pathway is purine metabolism; AMP biosynthesis via de novo pathway; AMP from IMP: step 1/2. In terms of biological role, plays an important role in the de novo pathway of purine nucleotide biosynthesis. Catalyzes the first committed step in the biosynthesis of AMP from IMP. This chain is Adenylosuccinate synthetase, found in Legionella pneumophila (strain Lens).